A 145-amino-acid polypeptide reads, in one-letter code: uncharacterized protein (145 aa).

The next 2 membrane-spanning stretches (helical) occupy residues 20–40 (LIGP…GMFF) and 116–136 (MIML…VLSA).

It localises to the membrane. This is an uncharacterized protein from Saccharomyces cerevisiae (strain ATCC 204508 / S288c) (Baker's yeast).